Here is a 368-residue protein sequence, read N- to C-terminus: 3-dehydroquinate synthase (368 aa).

NAD(+) contacts are provided by residues 112–116 (GVIGD), 136–137 (TT), Lys149, Lys158, and 176–179 (TLIT). Zn(2+) contacts are provided by Glu191, His256, and His273.

It belongs to the sugar phosphate cyclases superfamily. Dehydroquinate synthase family. The cofactor is Co(2+). It depends on Zn(2+) as a cofactor. NAD(+) is required as a cofactor.

It localises to the cytoplasm. It catalyses the reaction 7-phospho-2-dehydro-3-deoxy-D-arabino-heptonate = 3-dehydroquinate + phosphate. Its pathway is metabolic intermediate biosynthesis; chorismate biosynthesis; chorismate from D-erythrose 4-phosphate and phosphoenolpyruvate: step 2/7. Its function is as follows. Catalyzes the conversion of 3-deoxy-D-arabino-heptulosonate 7-phosphate (DAHP) to dehydroquinate (DHQ). This is 3-dehydroquinate synthase from Prochlorococcus marinus (strain NATL2A).